A 716-amino-acid chain; its full sequence is Putative proline--tRNA ligase C19C7.06 (716 aa).

The disordered stretch occupies residues 655 to 675 (KNSARQVNGDEPEDEKAPSMG).

It belongs to the class-II aminoacyl-tRNA synthetase family.

The protein localises to the cytoplasm. It carries out the reaction tRNA(Pro) + L-proline + ATP = L-prolyl-tRNA(Pro) + AMP + diphosphate. This Schizosaccharomyces pombe (strain 972 / ATCC 24843) (Fission yeast) protein is Putative proline--tRNA ligase C19C7.06 (prs1).